A 333-amino-acid polypeptide reads, in one-letter code: CMP-N-acetylneuraminate-beta-galactosamide-alpha-2,3-sialyltransferase 4 (333 aa).

The Cytoplasmic segment spans residues 1 to 8; sequence MTSKSHWK. The helical; Signal-anchor for type II membrane protein transmembrane segment at 9 to 26 threads the bilayer; sequence LLALALVLVVVMVWYSIS. Topologically, residues 27-333 are lumenal; sequence REDRYIEFFY…MGAVKNLTYF (307 aa). 4 N-linked (GlcNAc...) asparagine glycosylation sites follow: Asn61, Asn131, Asn310, and Asn329. Cys120 and Cys273 are oxidised to a cystine.

The protein belongs to the glycosyltransferase 29 family.

The protein localises to the golgi apparatus. It localises to the golgi stack membrane. The enzyme catalyses a beta-D-galactosyl-(1-&gt;3)-N-acetyl-beta-D-galactosaminyl derivative + CMP-N-acetyl-beta-neuraminate = an N-acetyl-alpha-neuraminyl-(2-&gt;3)-beta-D-galactosyl-(1-&gt;3)-N-acetyl-beta-D-galactosaminyl derivative + CMP + H(+). It catalyses the reaction a beta-D-galactosyl-(1-&gt;3)-N-acetyl-alpha-D-galactosaminyl derivative + CMP-N-acetyl-beta-neuraminate = an N-acetyl-alpha-neuraminyl-(2-&gt;3)-beta-D-galactosyl-(1-&gt;3)-N-acetyl-alpha-D-galactosaminyl derivative + CMP + H(+). It carries out the reaction a beta-D-galactosyl-(1-&gt;4)-N-acetyl-beta-D-glucosaminyl derivative + CMP-N-acetyl-beta-neuraminate = an N-acetyl-alpha-neuraminyl-(2-&gt;3)-beta-D-galactosyl-(1-&gt;4)-N-acetyl-beta-D-glucosaminyl derivative + CMP + H(+). The catalysed reaction is a ganglioside GM1 (d18:1(4E)) + CMP-N-acetyl-beta-neuraminate = a ganglioside GD1a (d18:1(4E)) + CMP + H(+). The enzyme catalyses a ganglioside GA1 (d18:1(4E)) + CMP-N-acetyl-beta-neuraminate = a ganglioside GM1b (d18:1(4E)) + CMP + H(+). It catalyses the reaction a ganglioside GT1c (d18:1(4E)) + CMP-N-acetyl-beta-neuraminate = a ganglioside GQ1c (d18:1(4E)) + CMP + H(+). It carries out the reaction a neolactoside nLc4Cer + CMP-N-acetyl-beta-neuraminate = a neolactoside IV(3)-alpha-NeuAc-nLc4Cer + CMP + H(+). The catalysed reaction is a neolactoside nLc4Cer(d18:1(4E)) + CMP-N-acetyl-beta-neuraminate = a neolactoside IV(3)-alpha-NeuAc-nLc4Cer(d18:1(4E)) + CMP + H(+). Its pathway is protein modification; protein glycosylation. The protein operates within glycolipid biosynthesis. In terms of biological role, a beta-galactoside alpha2-3 sialyltransferase involved in terminal sialylation of glycoproteins and glycolipids. Catalyzes the transfer of sialic acid (N-acetyl-neuraminic acid; Neu5Ac) from the nucleotide sugar donor CMP-Neu5Ac onto acceptor Galbeta-(1-&gt;3)-GalNAc- and Galbeta-(1-&gt;4)-GlcNAc-terminated glycoconjugates through an alpha2-3 linkage. Plays a major role in hemostasis. Responsible for sialylation of plasma VWF/von Willebrand factor, preventing its recognition by asialoglycoprotein receptors (ASGPR) and subsequent clearance. Regulates ASGPR-mediated clearance of platelets. Participates in the biosynthesis of the sialyl Lewis X epitopes, both on O- and N-glycans, which are recognized by SELE/E-selectin, SELP/P-selectin and SELL/L-selectin. Essential for selectin-mediated rolling and adhesion of leukocytes during extravasation. Contributes to adhesion and transendothelial migration of neutrophils likely through terminal sialylation of CXCR2. In glycosphingolipid biosynthesis, sialylates GM1 and GA1 gangliosides to form GD1a and GM1b, respectively. Metabolizes brain c-series ganglioside GT1c forming GQ1c. Synthesizes ganglioside LM1 (IV3Neu5Ac-nLc4Cer), a major structural component of peripheral nerve myelin. This chain is CMP-N-acetylneuraminate-beta-galactosamide-alpha-2,3-sialyltransferase 4 (St3gal4), found in Rattus norvegicus (Rat).